We begin with the raw amino-acid sequence, 887 residues long: Probable alpha/beta-glucosidase agdC (887 aa).

The first 17 residues, 1 to 17 (MLRSLLLLAPMVGAAVA), serve as a signal peptide directing secretion. Residues N171, N293, and N373 are each glycosylated (N-linked (GlcNAc...) asparagine). D422 functions as the Nucleophile in the catalytic mechanism. E425 is an active-site residue. The interval 457-483 (PRPLPGFPDDFQPPAASKRSVAKGSKV) is disordered. Residue D571 is the Proton donor of the active site. N-linked (GlcNAc...) asparagine glycans are attached at residues N747 and N879.

This sequence belongs to the glycosyl hydrolase 31 family.

The protein resides in the secreted. The enzyme catalyses Hydrolysis of terminal, non-reducing (1-&gt;4)-linked alpha-D-glucose residues with release of alpha-D-glucose.. It catalyses the reaction Hydrolysis of terminal, non-reducing beta-D-glucosyl residues with release of beta-D-glucose.. Glucosidase involved in the degradation of cellulosic biomass. Has both alpha- and beta-glucosidase activity. This is Probable alpha/beta-glucosidase agdC (agdC) from Aspergillus clavatus (strain ATCC 1007 / CBS 513.65 / DSM 816 / NCTC 3887 / NRRL 1 / QM 1276 / 107).